The chain runs to 147 residues: MDLSNLSPAPGSTKARKRLGRGPGSGNGTTAGRGNKGHNSRSGGGVRPGFEGGQMPLHRRLPKRGFVNIFAKDIAVVNIRDLARFESGSVVDGEALKAKGLVKGRVDGIKLLGKGDIAYPLTVKVSHVSRSAREKIEAAGGAIEVIS.

A disordered region spans residues 1 to 57 (MDLSNLSPAPGSTKARKRLGRGPGSGNGTTAGRGNKGHNSRSGGGVRPGFEGGQMPL). Gly residues-rich tracts occupy residues 21 to 31 (RGPGSGNGTTA) and 42 to 52 (SGGGVRPGFEG).

The protein belongs to the universal ribosomal protein uL15 family. Part of the 50S ribosomal subunit.

Binds to the 23S rRNA. The chain is Large ribosomal subunit protein uL15 from Desulfosudis oleivorans (strain DSM 6200 / JCM 39069 / Hxd3) (Desulfococcus oleovorans).